Here is a 360-residue protein sequence, read N- to C-terminus: Peptide chain release factor 1 (360 aa).

Gln-235 is subject to N5-methylglutamine. The disordered stretch occupies residues Lys-285–Asp-305.

Belongs to the prokaryotic/mitochondrial release factor family. In terms of processing, methylated by PrmC. Methylation increases the termination efficiency of RF1.

It is found in the cytoplasm. Functionally, peptide chain release factor 1 directs the termination of translation in response to the peptide chain termination codons UAG and UAA. The chain is Peptide chain release factor 1 from Proteus mirabilis (strain HI4320).